A 192-amino-acid chain; its full sequence is A-type ATP synthase subunit E (192 aa).

The interval 1–66 (MSLDTVVEDI…QERDQKLSSA (66 aa)) is disordered. Basic and acidic residues predominate over residues 8-26 (EDIRDEARARADEIRSEGE). Positions 27–49 (ERAEEIIDEAEREADDIVDEAER) are enriched in acidic residues. Residues 50–66 (EAERKISQERDQKLSSA) show a composition bias toward basic and acidic residues.

This sequence belongs to the V-ATPase E subunit family. Has multiple subunits with at least A(3), B(3), C, D, E, F, H, I and proteolipid K(x).

Its subcellular location is the cell membrane. Its function is as follows. Component of the A-type ATP synthase that produces ATP from ADP in the presence of a proton gradient across the membrane. This chain is A-type ATP synthase subunit E, found in Natronomonas pharaonis (strain ATCC 35678 / DSM 2160 / CIP 103997 / JCM 8858 / NBRC 14720 / NCIMB 2260 / Gabara) (Halobacterium pharaonis).